A 289-amino-acid polypeptide reads, in one-letter code: Phosphatidylglycerol--prolipoprotein diacylglyceryl transferase (289 aa).

7 helical membrane passes run 23 to 43 (ALHW…WLAV), 61 to 81 (LLYM…VLFY), 99 to 119 (GGMS…WFAH), 125 to 145 (FFQV…AGRL), 199 to 219 (SQLY…NLFI), 226 to 246 (GSVS…TEFF), and 259 to 279 (LFSM…LMMV). Arginine 144 serves as a coordination point for a 1,2-diacyl-sn-glycero-3-phospho-(1'-sn-glycerol).

It belongs to the Lgt family.

The protein resides in the cell inner membrane. It carries out the reaction L-cysteinyl-[prolipoprotein] + a 1,2-diacyl-sn-glycero-3-phospho-(1'-sn-glycerol) = an S-1,2-diacyl-sn-glyceryl-L-cysteinyl-[prolipoprotein] + sn-glycerol 1-phosphate + H(+). The protein operates within protein modification; lipoprotein biosynthesis (diacylglyceryl transfer). Catalyzes the transfer of the diacylglyceryl group from phosphatidylglycerol to the sulfhydryl group of the N-terminal cysteine of a prolipoprotein, the first step in the formation of mature lipoproteins. In Pectobacterium carotovorum subsp. carotovorum (strain PC1), this protein is Phosphatidylglycerol--prolipoprotein diacylglyceryl transferase.